The primary structure comprises 367 residues: ELAV-like protein 3 (367 aa).

RRM domains lie at 39–117 (TNLI…YARP), 125–205 (ANLY…FANN), and 284–362 (WCIF…FKTS).

This sequence belongs to the RRM elav family. Interacts with MAP1B light chain LC1. Brain specific.

RNA-binding protein that binds to AU-rich element (ARE) sequences of target mRNAs, including VEGF mRNA. May also bind poly-A tracts via RRM 3. May be involved in neuronal differentiation and maintenance. Plays a role in the stabilization of GAP43 mRNA and in spatial learning. In Homo sapiens (Human), this protein is ELAV-like protein 3 (ELAVL3).